The chain runs to 193 residues: Small ribosomal subunit protein uS7 (193 aa).

It belongs to the universal ribosomal protein uS7 family. Part of the 30S ribosomal subunit.

Its function is as follows. One of the primary rRNA binding proteins, it binds directly to 16S rRNA where it nucleates assembly of the head domain of the 30S subunit. Is located at the subunit interface close to the decoding center. The chain is Small ribosomal subunit protein uS7 from Saccharolobus solfataricus (strain ATCC 35092 / DSM 1617 / JCM 11322 / P2) (Sulfolobus solfataricus).